The sequence spans 232 residues: Multiple organellar RNA editing factor 6, mitochondrial (232 aa).

The transit peptide at 1–67 directs the protein to the mitochondrion; it reads MAKTLSRSTA…TIRTRMDRSG (67 aa). The disordered stretch occupies residues 208 to 232; that stretch reads TNQRGSDKPKYHDRIRNVRRRENMR. Positions 212–232 are enriched in basic and acidic residues; it reads GSDKPKYHDRIRNVRRRENMR.

It belongs to the MORF family. Heterodimers with MORF8/RIP1, MORF3/RIP3, MORF6/RIP6, MORF7/RIP7 and MORF9/RIP9.

Its subcellular location is the mitochondrion. Involved in organellar RNA editing. Required for the processing of few RNA editing sites in mitochondria. The chain is Multiple organellar RNA editing factor 6, mitochondrial from Arabidopsis thaliana (Mouse-ear cress).